The sequence spans 1109 residues: DNA-directed RNA polymerase subunit beta (1109 aa).

This sequence belongs to the RNA polymerase beta chain family. In terms of assembly, in plastids the minimal PEP RNA polymerase catalytic core is composed of four subunits: alpha, beta, beta', and beta''. When a (nuclear-encoded) sigma factor is associated with the core the holoenzyme is formed, which can initiate transcription.

The protein resides in the plastid. It localises to the chloroplast. The catalysed reaction is RNA(n) + a ribonucleoside 5'-triphosphate = RNA(n+1) + diphosphate. DNA-dependent RNA polymerase catalyzes the transcription of DNA into RNA using the four ribonucleoside triphosphates as substrates. This Nephroselmis olivacea (Green alga) protein is DNA-directed RNA polymerase subunit beta.